The following is a 388-amino-acid chain: MNLHEYQAKELLAKYGLPVQQGILASNADEAAAAFDQLGGKFAVVKAQVHAGGRGKAGGVKVVKSREEAADVAATLIGKNLVTYQTDANGQPVNSVLVCEDMYPVERELYLGAVVDRSTRRVTFMASTEGGVEIEEVAHNTPEKILKVTVDPLVGLLPFQAREVAFALGLKDKQVNEFVKLMTGAYRAFVENDFALFEINPLAVRANGALACVDAKVGIDSNALYRLPAVAALRDKSQENERELKASEFDLNYVALEGNIGCMVNGAGLAMATMDIIKLKGGQPANFLDVGGGATKERVVEAFKLILADPSVKGVLINIFGGIVRCDMIAEAIIAAVKEVNVTVPVVVRLEGNNAELGARLLEESGLKLTSAQGLNDAAEKIVAAVGA.

One can recognise an ATP-grasp domain in the interval 9 to 245 (KELLAKYGLP…KSQENERELK (237 aa)). Residues Lys-46, 53-55 (GRG), Glu-100, Tyr-103, and Glu-108 contribute to the ATP site. Mg(2+)-binding residues include Asn-200 and Asp-214. Substrate-binding positions include Asn-265 and 322–324 (GIV).

Belongs to the succinate/malate CoA ligase beta subunit family. Heterotetramer of two alpha and two beta subunits. It depends on Mg(2+) as a cofactor.

The catalysed reaction is succinate + ATP + CoA = succinyl-CoA + ADP + phosphate. It catalyses the reaction GTP + succinate + CoA = succinyl-CoA + GDP + phosphate. The protein operates within carbohydrate metabolism; tricarboxylic acid cycle; succinate from succinyl-CoA (ligase route): step 1/1. In terms of biological role, succinyl-CoA synthetase functions in the citric acid cycle (TCA), coupling the hydrolysis of succinyl-CoA to the synthesis of either ATP or GTP and thus represents the only step of substrate-level phosphorylation in the TCA. The beta subunit provides nucleotide specificity of the enzyme and binds the substrate succinate, while the binding sites for coenzyme A and phosphate are found in the alpha subunit. The polypeptide is Succinate--CoA ligase [ADP-forming] subunit beta (Laribacter hongkongensis (strain HLHK9)).